We begin with the raw amino-acid sequence, 269 residues long: Pertussis toxin subunit 1 homolog (269 aa).

An N-terminal signal peptide occupies residues 1–34; it reads MRCTRAIRQTARTGWLTWLAILAVTAPVTSPAWA.

This sequence belongs to the bacterial exotoxin subunit A family.

This Bordetella bronchiseptica (strain ATCC BAA-588 / NCTC 13252 / RB50) (Alcaligenes bronchisepticus) protein is Pertussis toxin subunit 1 homolog (ptxA).